Reading from the N-terminus, the 829-residue chain is MTPKFDIDYVLANITEDDKIALLSGSDFWHTHAIPKFNVPPIRTTDGPNGIRGTKFFAGVPAACLPCGTALGATWDRDLLHQAGVLLGKECLAKGAHCWLGPTINMQRSPLGGRGFESFAEDPHLSGIMAKSIILGCESTGVISTVKHYVGNDQEHERRAVDVLVTPRALREIYLRPFQIVARDAHPGALMTSYNKINGKHVVENPAMLDIVRKDWHWDPLIMSDWLGTYTTIDSLNAGLDLEMPGPTRYRGKYIESAMQARLIKQSTISKRARKVLEFVERASRAPVSADETGRDFPEDRALNRTLCANSIVLLKNDGNLLPIPKTVKKIALIGSHVKTPAISGGGSASLEPYYAVSLYDAVVEALPDAEILYEAGAYAHRMLPVIDRMLSNAVIHFYNEPPEKERTLLATEPVVNTAFQLMDYNAPGLNRALFWATLIGEFTPDVSGLWDFGLTVFGTATLFIDDEMVIDNATRQTRGTAFFGKGTVQEVGQKQLTAGQTYKIRIEFGSANTSPMKAIGVVHFGGGAAHLGACLHMDPEQMVANAVRVAAEADYTIVCTGLNRDWESEGFDRPDMDLPPGIDALISSVLDVAADRTVIVNQSGTPVTMPWAHRARGIVQAWYGGNETGHGIADVLFGDVNPSGKLPLSWPADVRHNPTYLNNMSVGGRMLYGEDVYIGYRFYEKVGREVLFPFGHGLSYTTFHVSPEATVSPIVFSSDSPPTATVLVKNTGPMAGAQTLQLYIAAPNSTTPRPVKELHGFTKVFLQSGEERSVSIHIDRYATSFWDEIEDMWKSEEGVYQVLIGTSSQEIVSRGEFRVEQTRYWRGV.

Residue asparagine 13 is glycosylated (N-linked (GlcNAc...) asparagine). The active site involves aspartate 225. N-linked (GlcNAc...) asparagine glycosylation is found at asparagine 304, asparagine 473, asparagine 602, asparagine 627, asparagine 664, and asparagine 749. The 160-residue stretch at 389 to 548 (RMLSNAVIHF…DPEQMVANAV (160 aa)) folds into the PA14 domain.

It belongs to the glycosyl hydrolase 3 family.

The protein localises to the secreted. It carries out the reaction Hydrolysis of terminal, non-reducing beta-D-glucosyl residues with release of beta-D-glucose.. Its pathway is glycan metabolism; cellulose degradation. In terms of biological role, beta-glucosidases are one of a number of cellulolytic enzymes involved in the degradation of cellulosic biomass. Catalyzes the last step releasing glucose from the inhibitory cellobiose. The protein is Probable beta-glucosidase H (bglH) of Aspergillus fumigatus (strain CBS 144.89 / FGSC A1163 / CEA10) (Neosartorya fumigata).